A 146-amino-acid polypeptide reads, in one-letter code: Leptin (146 aa).

Residues C96 and C146 are joined by a disulfide bond.

Belongs to the leptin family.

The protein resides in the secreted. Key player in the regulation of energy balance and body weight control. Once released into the circulation, has central and peripheral effects by binding LEPR, found in many tissues, which results in the activation of several major signaling pathways. In the hypothalamus, acts as an appetite-regulating factor that induces a decrease in food intake and an increase in energy consumption by inducing anorexinogenic factors and suppressing orexigenic neuropeptides, also regulates bone mass and secretion of hypothalamo-pituitary-adrenal hormones. In the periphery, increases basal metabolism, influences reproductive function, regulates pancreatic beta-cell function and insulin secretion, is pro-angiogenic for endothelial cell and affects innate and adaptive immunity. In the arcuate nucleus of the hypothalamus, activates by depolarization POMC neurons inducing FOS and SOCS3 expression to release anorexigenic peptides and inhibits by hyperpolarization NPY neurons inducing SOCS3 with a consequent reduction on release of orexigenic peptides. In addition to its known satiety inducing effect, has a modulatory role in nutrient absorption. In the intestine, reduces glucose absorption by enterocytes by activating PKC and leading to a sequential activation of p38, PI3K and ERK signaling pathways which exerts an inhibitory effect on glucose absorption. Acts as a growth factor on certain tissues, through the activation of different signaling pathways increases expression of genes involved in cell cycle regulation such as CCND1, via JAK2-STAT3 pathway, or VEGFA, via MAPK1/3 and PI3K-AKT1 pathways. May also play an apoptotic role via JAK2-STAT3 pathway and up-regulation of BIRC5 expression. Pro-angiogenic, has mitogenic activity on vascular endothelial cells and plays a role in matrix remodeling by regulating the expression of matrix metalloproteinases (MMPs) and tissue inhibitors of metalloproteinases (TIMPs). In innate immunity, modulates the activity and function of neutrophils by increasing chemotaxis and the secretion of oxygen radicals. Increases phagocytosis by macrophages and enhances secretion of pro-inflammatory mediators. Increases cytotoxic ability of NK cells. Plays a pro-inflammatory role, in synergy with IL1B, by inducing NOS2 which promotes the production of IL6, IL8 and Prostaglandin E2, through a signaling pathway that involves JAK2, PI3K, MAP2K1/MEK1 and MAPK14/p38. In adaptive immunity, promotes the switch of memory T-cells towards T helper-1 cell immune responses. Increases CD4(+)CD25(-) T-cell proliferation and reduces autophagy during TCR (T-cell receptor) stimulation, through MTOR signaling pathway activation and BCL2 up-regulation. The chain is Leptin (LEP) from Gorilla gorilla gorilla (Western lowland gorilla).